A 33-amino-acid chain; its full sequence is Photosystem II reaction center protein Psb30 (33 aa).

A helical transmembrane segment spans residues 5–25 (VVVQLGSLSLIVLAGPIIVLL).

This sequence belongs to the Psb30/Ycf12 family. PSII is composed of 1 copy each of membrane proteins PsbA, PsbB, PsbC, PsbD, PsbE, PsbF, PsbH, PsbI, PsbJ, PsbK, PsbL, PsbM, PsbT, PsbX, PsbY, PsbZ, Psb30/Ycf12, peripheral proteins of the oxygen-evolving complex and a large number of cofactors. It forms dimeric complexes.

The protein localises to the plastid. The protein resides in the chloroplast thylakoid membrane. Functionally, a core subunit of photosystem II (PSII), probably helps stabilize the reaction center. The protein is Photosystem II reaction center protein Psb30 of Mesostigma viride (Green alga).